The primary structure comprises 1576 residues: Spermatogenesis-associated protein 31D1 (1576 aa).

Residues 29–49 (FICLSGLGLFILYLFYVVLTL) form a helical membrane-spanning segment. 5 disordered regions span residues 170–197 (FTLA…PPPP), 542–572 (HESP…QGQS), 782–801 (KDHL…RSNS), 952–1033 (SQGD…TDFQ), and 1293–1347 (RVSP…PPPE). The segment covering 546-565 (VLPPPQPLSLPSTQPLPLPQ) has biased composition (pro residues). The segment covering 966–980 (RSTFQGEKLGTTSSV) has biased composition (polar residues). Over residues 1004 to 1019 (QFSDTDHDLIETDSKD) the composition is skewed to basic and acidic residues. The span at 1020–1032 (GASTSLRRGTTDF) shows a compositional bias: polar residues.

Belongs to the SPATA31 family.

The protein resides in the membrane. Its function is as follows. May play a role in spermatogenesis. This chain is Spermatogenesis-associated protein 31D1 (SPATA31D1), found in Homo sapiens (Human).